A 452-amino-acid chain; its full sequence is UPF0210 protein Dred_1672 (452 aa).

This sequence belongs to the UPF0210 family. As to quaternary structure, homodimer.

This is UPF0210 protein Dred_1672 from Desulforamulus reducens (strain ATCC BAA-1160 / DSM 100696 / MI-1) (Desulfotomaculum reducens).